Consider the following 338-residue polypeptide: RNA 3'-terminal phosphate cyclase (338 aa).

Residues glutamine 103 and tyrosine 283 to glutamine 287 each bind ATP. Histidine 308 (tele-AMP-histidine intermediate) is an active-site residue.

The protein belongs to the RNA 3'-terminal cyclase family. Type 1 subfamily.

The protein resides in the cytoplasm. The catalysed reaction is a 3'-end 3'-phospho-ribonucleotide-RNA + ATP = a 3'-end 2',3'-cyclophospho-ribonucleotide-RNA + AMP + diphosphate. Its function is as follows. Catalyzes the conversion of 3'-phosphate to a 2',3'-cyclic phosphodiester at the end of RNA. The mechanism of action of the enzyme occurs in 3 steps: (A) adenylation of the enzyme by ATP; (B) transfer of adenylate to an RNA-N3'P to produce RNA-N3'PP5'A; (C) and attack of the adjacent 2'-hydroxyl on the 3'-phosphorus in the diester linkage to produce the cyclic end product. The biological role of this enzyme is unknown but it is likely to function in some aspects of cellular RNA processing. This chain is RNA 3'-terminal phosphate cyclase, found in Escherichia coli O139:H28 (strain E24377A / ETEC).